Here is a 550-residue protein sequence, read N- to C-terminus: CTP synthase (550 aa).

The interval 1–267 (MKTKFIFITG…DQKIAIMLRL (267 aa)) is amidoligase domain. A CTP-binding site is contributed by serine 14. Residue serine 14 coordinates UTP. ATP-binding positions include 15-20 (SLGKGL) and aspartate 72. Positions 72 and 141 each coordinate Mg(2+). CTP is bound by residues 148–150 (DIE), 188–193 (KTKPTQ), and lysine 224. UTP contacts are provided by residues 188-193 (KTKPTQ) and lysine 224. In terms of domain architecture, Glutamine amidotransferase type-1 spans 292–545 (TIGIVGKYVD…IKAAKKEAMG (254 aa)). Position 354 (glycine 354) interacts with L-glutamine. The active-site Nucleophile; for glutamine hydrolysis is cysteine 381. Residues 382-385 (LGMQ), glutamate 405, and arginine 473 contribute to the L-glutamine site. Residues histidine 518 and glutamate 520 contribute to the active site.

Belongs to the CTP synthase family. Homotetramer.

The catalysed reaction is UTP + L-glutamine + ATP + H2O = CTP + L-glutamate + ADP + phosphate + 2 H(+). It catalyses the reaction L-glutamine + H2O = L-glutamate + NH4(+). It carries out the reaction UTP + NH4(+) + ATP = CTP + ADP + phosphate + 2 H(+). The protein operates within pyrimidine metabolism; CTP biosynthesis via de novo pathway; CTP from UDP: step 2/2. Allosterically activated by GTP, when glutamine is the substrate; GTP has no effect on the reaction when ammonia is the substrate. The allosteric effector GTP functions by stabilizing the protein conformation that binds the tetrahedral intermediate(s) formed during glutamine hydrolysis. Inhibited by the product CTP, via allosteric rather than competitive inhibition. Its function is as follows. Catalyzes the ATP-dependent amination of UTP to CTP with either L-glutamine or ammonia as the source of nitrogen. Regulates intracellular CTP levels through interactions with the four ribonucleotide triphosphates. This chain is CTP synthase, found in Nitratidesulfovibrio vulgaris (strain DSM 19637 / Miyazaki F) (Desulfovibrio vulgaris).